The chain runs to 72 residues: UPF0270 protein YheU (72 aa).

This sequence belongs to the UPF0270 family.

The sequence is that of UPF0270 protein YheU from Escherichia coli (strain ATCC 8739 / DSM 1576 / NBRC 3972 / NCIMB 8545 / WDCM 00012 / Crooks).